A 218-amino-acid chain; its full sequence is MEPGFWHEKWHQQQIGFHQQDINPFLVKYWQKLGLPADTQVFVPLCGKSLDMCFLAEQGHQVIGCELNELAVQQFFSDNQLEMTQTTVGEHQHYHTEQISLYQGDIFTLPKTITQAVTAFYDRAALIAWPESMRAQYAKQLASLLPSGSVGLLVTLDYPQEALIGPPFAVSPTWVEQHLSDDFDIEVLASQDVLADNPRFIKKAVPWLNEAAYLLKRK.

S-adenosyl-L-methionine contacts are provided by W10, L45, E66, and R123.

Belongs to the class I-like SAM-binding methyltransferase superfamily. TPMT family.

The protein localises to the cytoplasm. It carries out the reaction S-adenosyl-L-methionine + a thiopurine = S-adenosyl-L-homocysteine + a thiopurine S-methylether.. The sequence is that of Thiopurine S-methyltransferase from Shewanella baltica (strain OS223).